Consider the following 340-residue polypeptide: N-acetyl-gamma-glutamyl-phosphate reductase (340 aa).

Cysteine 146 is a catalytic residue.

This sequence belongs to the NAGSA dehydrogenase family. Type 1 subfamily.

The protein localises to the cytoplasm. The catalysed reaction is N-acetyl-L-glutamate 5-semialdehyde + phosphate + NADP(+) = N-acetyl-L-glutamyl 5-phosphate + NADPH + H(+). It participates in amino-acid biosynthesis; L-arginine biosynthesis; N(2)-acetyl-L-ornithine from L-glutamate: step 3/4. Catalyzes the NADPH-dependent reduction of N-acetyl-5-glutamyl phosphate to yield N-acetyl-L-glutamate 5-semialdehyde. The protein is N-acetyl-gamma-glutamyl-phosphate reductase of Streptococcus mutans serotype c (strain ATCC 700610 / UA159).